The primary structure comprises 569 residues: GATOR1 complex protein NPRL3 (569 aa).

Disordered stretches follow at residues 27–60 and 416–477; these read PFQR…EQDG and PSEE…GDSP. Polar residues-rich tracts occupy residues 34–52 and 438–468; these read HPAS…SNTG and SLST…NSSA. At Ser476 the chain carries Phosphoserine.

It belongs to the NPR3 family. In terms of assembly, within the GATOR complex, component of the GATOR1 subcomplex, made of DEPDC5, NPRL2 and NPRL3. GATOR1 mediates the strong interaction of the GATOR complex with small GTPases Rag (RagA/RRAGA, RagB/RRAGB, RagC/RRAGC and/or RagD/RRAGD) heterodimers. GATOR1 interacts with GPR155/LYCHOS; interaction takes place in presence of cholesterol and prevents interaction between GATOR1 and KICSTOR. In terms of tissue distribution, widely expressed. Expressed in the frontal lobe cortex as well as in the temporal, parietal, and occipital lobes.

The protein localises to the lysosome membrane. As a component of the GATOR1 complex functions as an inhibitor of the amino acid-sensing branch of the mTORC1 pathway. In response to amino acid depletion, the GATOR1 complex has GTPase activating protein (GAP) activity and strongly increases GTP hydrolysis by RagA/RRAGA (or RagB/RRAGB) within heterodimeric Rag complexes, thereby turning them into their inactive GDP-bound form, releasing mTORC1 from lysosomal surface and inhibiting mTORC1 signaling. In the presence of abundant amino acids, the GATOR1 complex is negatively regulated by GATOR2, the other GATOR subcomplex, in this amino acid-sensing branch of the TORC1 pathway. The sequence is that of GATOR1 complex protein NPRL3 from Homo sapiens (Human).